Reading from the N-terminus, the 346-residue chain is Ribosomal RNA small subunit methyltransferase H (346 aa).

Residues 53–55, Asp-70, Phe-97, Asp-114, and Gln-121 each bind S-adenosyl-L-methionine; that span reads GGY.

It belongs to the methyltransferase superfamily. RsmH family.

It is found in the cytoplasm. The catalysed reaction is cytidine(1402) in 16S rRNA + S-adenosyl-L-methionine = N(4)-methylcytidine(1402) in 16S rRNA + S-adenosyl-L-homocysteine + H(+). Specifically methylates the N4 position of cytidine in position 1402 (C1402) of 16S rRNA. In Bartonella henselae (strain ATCC 49882 / DSM 28221 / CCUG 30454 / Houston 1) (Rochalimaea henselae), this protein is Ribosomal RNA small subunit methyltransferase H.